The sequence spans 305 residues: Glutaminase (305 aa).

The substrate site is built by S61, N113, E158, N165, Y189, Y241, and V259.

Belongs to the glutaminase family. In terms of assembly, homotetramer.

It catalyses the reaction L-glutamine + H2O = L-glutamate + NH4(+). This Clostridium botulinum (strain ATCC 19397 / Type A) protein is Glutaminase.